The primary structure comprises 413 residues: Peptidase T (413 aa).

Residue His81 coordinates Zn(2+). Residue Asp83 is part of the active site. Asp143 is a Zn(2+) binding site. The active-site Proton acceptor is the Glu178. Zn(2+) is bound by residues Glu179, Asp201, and His383.

Belongs to the peptidase M20B family. Homodimer. Zn(2+) serves as cofactor.

It is found in the cytoplasm. The enzyme catalyses Release of the N-terminal residue from a tripeptide.. Inhibited by EDTA, by the reducing agents dithiothreitol and 13-mercaptoethanol, and by the divalent cation Cu(2+). Its function is as follows. Cleaves the N-terminal amino acid of tripeptides. Has a broad specificity for tripeptides with no clear preference for a particular tripeptide. Tripeptides with proline in the second position are an exception and are not hydrolyzed. Does not hydrolyze dipeptides, tetrapeptides, or oligopeptides. The polypeptide is Peptidase T (pepT) (Lactococcus lactis subsp. cremoris (Streptococcus cremoris)).